Consider the following 526-residue polypeptide: Ubiquitin carboxyl-terminal hydrolase 17-like protein A (526 aa).

The disordered stretch occupies residues 1–21 (MVVALSFPEADPALSSPDAPE). The USP domain maps to 51–348 (CGLQNTGNSC…NAYVLFYVQQ (298 aa)). The active-site Nucleophile is cysteine 60. The active-site Proton acceptor is histidine 307. Positions 374-385 (KKSRRKKHKKKS) are enriched in basic residues. Disordered stretches follow at residues 374–394 (KKSR…LGEP) and 465–494 (RSTA…SQGP). A compositionally biased stretch (basic and acidic residues) spans 473–486 (DSPDKENQPLHNAD).

It belongs to the peptidase C19 family. Polyubiquitinated; ubiquitination leads to its subsequent degradation. In terms of tissue distribution, expressed in hematopoietic progenitor cell lines Ba/F3 and FDCP1. Not detected in brain, lung, liver, kidney, thymus, spleen and bone marrow.

The catalysed reaction is Thiol-dependent hydrolysis of ester, thioester, amide, peptide and isopeptide bonds formed by the C-terminal Gly of ubiquitin (a 76-residue protein attached to proteins as an intracellular targeting signal).. Functionally, deubiquitinating enzyme that removes conjugated ubiquitin from specific proteins to regulate different cellular processes. Has deubiquitinating enzyme activity for DNAH5, suggesting a role in the regulation of DNAH5 degradation by the ubiquitin-proteasome pathway. Has growth-suppressing activity; induces arrest in G1 phase upon controlled expression. The protein is Ubiquitin carboxyl-terminal hydrolase 17-like protein A (Usp17la) of Mus musculus (Mouse).